We begin with the raw amino-acid sequence, 294 residues long: Nucleotide-binding protein CLD_1131 (294 aa).

8-15 is a binding site for ATP; it reads GLSGAGKT. 59–62 contributes to the GTP binding site; it reads DIRG.

It belongs to the RapZ-like family.

Its function is as follows. Displays ATPase and GTPase activities. The protein is Nucleotide-binding protein CLD_1131 of Clostridium botulinum (strain Okra / Type B1).